The following is a 196-amino-acid chain: Imidazoleglycerol-phosphate dehydratase (196 aa).

It belongs to the imidazoleglycerol-phosphate dehydratase family.

It is found in the cytoplasm. It catalyses the reaction D-erythro-1-(imidazol-4-yl)glycerol 3-phosphate = 3-(imidazol-4-yl)-2-oxopropyl phosphate + H2O. It functions in the pathway amino-acid biosynthesis; L-histidine biosynthesis; L-histidine from 5-phospho-alpha-D-ribose 1-diphosphate: step 6/9. In Desulforudis audaxviator (strain MP104C), this protein is Imidazoleglycerol-phosphate dehydratase.